The sequence spans 240 residues: Demethylmenaquinone methyltransferase (240 aa).

S-adenosyl-L-methionine-binding positions include T62, D80, 102 to 103, and S119; that span reads DA.

Belongs to the class I-like SAM-binding methyltransferase superfamily. MenG/UbiE family.

It carries out the reaction a 2-demethylmenaquinol + S-adenosyl-L-methionine = a menaquinol + S-adenosyl-L-homocysteine + H(+). It functions in the pathway quinol/quinone metabolism; menaquinone biosynthesis; menaquinol from 1,4-dihydroxy-2-naphthoate: step 2/2. Functionally, methyltransferase required for the conversion of demethylmenaquinol (DMKH2) to menaquinol (MKH2). The chain is Demethylmenaquinone methyltransferase from Beutenbergia cavernae (strain ATCC BAA-8 / DSM 12333 / CCUG 43141 / JCM 11478 / NBRC 16432 / NCIMB 13614 / HKI 0122).